The chain runs to 282 residues: tRNA pseudouridine synthase A (282 aa).

Asp61 acts as the Nucleophile in catalysis. Tyr119 contacts substrate.

The protein belongs to the tRNA pseudouridine synthase TruA family. Homodimer.

The enzyme catalyses uridine(38/39/40) in tRNA = pseudouridine(38/39/40) in tRNA. Formation of pseudouridine at positions 38, 39 and 40 in the anticodon stem and loop of transfer RNAs. The sequence is that of tRNA pseudouridine synthase A from Nostoc sp. (strain PCC 7120 / SAG 25.82 / UTEX 2576).